A 346-amino-acid polypeptide reads, in one-letter code: MFLSILVALCLWLHLALGVRGAPCEAVRIPMCRHMPWNITRMPNHLHHSTQENAILAIEQYEELVDVNCSSVLRFFLCAMYAPICTLEFLHDPIKPCKSVCQRARDDCEPLMKMYNHSWPESLACDELPVYDRGVCISPEAIVTDLPEDVKWIDITPDMMVQERPLDVDCKRLSPDRCKCKKVKPTLATYLSKNCSYVIHAKIKAVQRSGCNEVTTVVDVKEIFKSSSPIPRTQVPLITNSSCQCPHILPHQDVLIMCYEWRSRMMLLENCLVEKWRDQLSKRSIQWEERLREQRRTIQDKKKTAGRTSRSNPPKPKGKPPAPKPASPKKNIKTRSAQKKTNPKKV.

The N-terminal stretch at 1 to 18 (MFLSILVALCLWLHLALG) is a signal peptide. Residues 19–139 (VRGAPCEAVR…VYDRGVCISP (121 aa)) enclose the FZ domain. 5 cysteine pairs are disulfide-bonded: C24–C85, C32–C78, C69–C108, C97–C136, and C101–C125. 2 N-linked (GlcNAc...) asparagine glycosylation sites follow: N38 and N68. N116, N194, and N240 each carry an N-linked (GlcNAc...) asparagine glycan. The NTR domain maps to 178-307 (CKCKKVKPTL…IQDKKKTAGR (130 aa)). Residues 294-303 (QRRTIQDKKK) show a composition bias toward basic and acidic residues. The disordered stretch occupies residues 294-346 (QRRTIQDKKKTAGRTSRSNPPKPKGKPPAPKPASPKKNIKTRSAQKKTNPKKV). The span at 313–326 (PPKPKGKPPAPKPA) shows a compositional bias: pro residues. Basic residues predominate over residues 330 to 346 (KNIKTRSAQKKTNPKKV).

This sequence belongs to the secreted frizzled-related protein (sFRP) family.

The protein localises to the secreted. In terms of biological role, soluble frizzled-related proteins (sFRPS) function as modulators of Wnt signaling through direct interaction with Wnts. They have a role in regulating cell growth and differentiation in specific cell types. SFRP4 plays a role in bone morphogenesis. May also act as a regulator of adult uterine morphology and function. May also increase apoptosis during ovulation possibly through modulation of FZ1/FZ4/WNT4 signaling. Has phosphaturic effects by specifically inhibiting sodium-dependent phosphate uptake. In Macaca mulatta (Rhesus macaque), this protein is Secreted frizzled-related protein 4 (SFRP4).